Here is a 144-residue protein sequence, read N- to C-terminus: Bacilliredoxin BC_2157 (144 aa).

It belongs to the bacilliredoxin family.

In Bacillus cereus (strain ATCC 14579 / DSM 31 / CCUG 7414 / JCM 2152 / NBRC 15305 / NCIMB 9373 / NCTC 2599 / NRRL B-3711), this protein is Bacilliredoxin BC_2157.